Here is a 378-residue protein sequence, read N- to C-terminus: Histidine decarboxylase (378 aa).

Position 120 (His-120) interacts with substrate. An N6-(pyridoxal phosphate)lysine modification is found at Lys-233.

This sequence belongs to the group II decarboxylase family. As to quaternary structure, homotetramer. It depends on pyridoxal 5'-phosphate as a cofactor.

It catalyses the reaction L-histidine + H(+) = histamine + CO2. The sequence is that of Histidine decarboxylase (hdc) from Klebsiella aerogenes (Enterobacter aerogenes).